The sequence spans 782 residues: Phosphoribosylformylglycinamidine synthase subunit PurL (782 aa).

His-48 is a catalytic residue. 2 residues coordinate ATP: Tyr-51 and Lys-90. Glu-92 lines the Mg(2+) pocket. Substrate-binding positions include 93 to 96 (SHNH) and Arg-115. Residue His-94 is the Proton acceptor of the active site. Asp-116 is a Mg(2+) binding site. Gln-239 is a substrate binding site. Mg(2+) is bound at residue Asp-267. 311-313 (ESQ) is a substrate binding site. Residues Asp-525 and Gly-562 each contribute to the ATP site. Asn-563 is a Mg(2+) binding site. A substrate-binding site is contributed by Ser-565.

The protein belongs to the FGAMS family. Monomer. Part of the FGAM synthase complex composed of 1 PurL, 1 PurQ and 2 PurS subunits.

The protein localises to the cytoplasm. The enzyme catalyses N(2)-formyl-N(1)-(5-phospho-beta-D-ribosyl)glycinamide + L-glutamine + ATP + H2O = 2-formamido-N(1)-(5-O-phospho-beta-D-ribosyl)acetamidine + L-glutamate + ADP + phosphate + H(+). The protein operates within purine metabolism; IMP biosynthesis via de novo pathway; 5-amino-1-(5-phospho-D-ribosyl)imidazole from N(2)-formyl-N(1)-(5-phospho-D-ribosyl)glycinamide: step 1/2. Part of the phosphoribosylformylglycinamidine synthase complex involved in the purines biosynthetic pathway. Catalyzes the ATP-dependent conversion of formylglycinamide ribonucleotide (FGAR) and glutamine to yield formylglycinamidine ribonucleotide (FGAM) and glutamate. The FGAM synthase complex is composed of three subunits. PurQ produces an ammonia molecule by converting glutamine to glutamate. PurL transfers the ammonia molecule to FGAR to form FGAM in an ATP-dependent manner. PurS interacts with PurQ and PurL and is thought to assist in the transfer of the ammonia molecule from PurQ to PurL. The protein is Phosphoribosylformylglycinamidine synthase subunit PurL of Nostoc sp. (strain PCC 7120 / SAG 25.82 / UTEX 2576).